The primary structure comprises 338 residues: Aspartate-semialdehyde dehydrogenase (338 aa).

NADP(+)-binding positions include 13–16 and 41–42; these read TGNV and NS. Arginine 101 lines the phosphate pocket. The active-site Acyl-thioester intermediate is cysteine 132. Residue glutamine 159 participates in substrate binding. 162–163 provides a ligand contact to NADP(+); it reads SG. Position 216 (lysine 216) interacts with phosphate. Arginine 237 lines the substrate pocket. The active-site Proton acceptor is histidine 244. Asparagine 317 provides a ligand contact to NADP(+).

Belongs to the aspartate-semialdehyde dehydrogenase family. As to quaternary structure, homodimer.

The catalysed reaction is L-aspartate 4-semialdehyde + phosphate + NADP(+) = 4-phospho-L-aspartate + NADPH + H(+). Its pathway is amino-acid biosynthesis; L-lysine biosynthesis via DAP pathway; (S)-tetrahydrodipicolinate from L-aspartate: step 2/4. The protein operates within amino-acid biosynthesis; L-methionine biosynthesis via de novo pathway; L-homoserine from L-aspartate: step 2/3. It functions in the pathway amino-acid biosynthesis; L-threonine biosynthesis; L-threonine from L-aspartate: step 2/5. Catalyzes the NADPH-dependent formation of L-aspartate-semialdehyde (L-ASA) by the reductive dephosphorylation of L-aspartyl-4-phosphate. The protein is Aspartate-semialdehyde dehydrogenase of Rickettsia bellii (strain RML369-C).